Consider the following 399-residue polypeptide: Beta-1,4-galactosyltransferase 1 (399 aa).

At 1–24 (MRFREQFLGGSAAMPGATLQRACR) the chain is on the cytoplasmic side. The helical; Signal-anchor for type II membrane protein transmembrane segment at 25–44 (LLVAVCALHLGVTLVYYLSG) threads the bilayer. Residues 45–399 (RDLSRLPQLV…QITVDIGTPR (355 aa)) lie on the Lumenal side of the membrane. Residues 61–113 (QGGTNGAAASKQPPGEQRPRGARPPPPLGVSPKPRPGLDSSPGAASGPGLKSN) are disordered. The span at 82-95 (ARPPPPLGVSPKPR) shows a compositional bias: pro residues. N113 carries N-linked (GlcNAc...) asparagine glycosylation. Cysteines 131 and 173 form a disulfide. UDP-alpha-D-galactose-binding positions include 184–188 (PFRNR), 223–225 (FNR), 250–251 (VD), and W311. A disulfide bridge connects residues C244 and C263. D251 serves as a coordination point for Mn(2+). 313-316 (GEDD) contacts N-acetyl-D-glucosamine. A Mn(2+)-binding site is contributed by H344. 344-346 (HSR) contributes to the UDP-alpha-D-galactose binding site. R356 contributes to the N-acetyl-D-glucosamine binding site.

The protein belongs to the glycosyltransferase 7 family. Homodimer; and heterodimer with alpha-lactalbumin to form lactose synthase. Interacts (via N-terminal cytoplasmic domain) with UBE2Q1 (via N-terminus); the interaction is direct. Mn(2+) serves as cofactor. In terms of processing, the soluble form derives from the membrane forms by proteolytic processing.

Its subcellular location is the golgi apparatus. It is found in the golgi stack membrane. The protein resides in the cell membrane. The protein localises to the cell surface. It localises to the cell projection. Its subcellular location is the filopodium. It is found in the secreted. It catalyses the reaction D-glucose + UDP-alpha-D-galactose = lactose + UDP + H(+). It carries out the reaction an N-acetyl-beta-D-glucosaminyl derivative + UDP-alpha-D-galactose = a beta-D-galactosyl-(1-&gt;4)-N-acetyl-beta-D-glucosaminyl derivative + UDP + H(+). The catalysed reaction is N-acetyl-D-glucosamine + UDP-alpha-D-galactose = beta-D-galactosyl-(1-&gt;4)-N-acetyl-D-glucosamine + UDP + H(+). The enzyme catalyses a beta-D-GlcNAc-(1-&gt;3)-beta-D-Gal-(1-&gt;4)-beta-D-Glc-(1&lt;-&gt;1)-Cer(d18:1(4E)) + UDP-alpha-D-galactose = a neolactoside nLc4Cer(d18:1(4E)) + UDP + H(+). It catalyses the reaction a beta-D-glucosylceramide + UDP-alpha-D-galactose = a beta-D-galactosyl-(1-&gt;4)-beta-D-glucosyl-(1&lt;-&gt;1)-ceramide + UDP + H(+). It carries out the reaction a neolactoside IV(3)-beta-GlcNAc-nLc4Cer + UDP-alpha-D-galactose = a neolactoside nLc6Cer + UDP + H(+). The protein operates within protein modification; protein glycosylation. The Golgi complex form catalyzes the production of lactose in the lactating mammary gland and could also be responsible for the synthesis of complex-type N-linked oligosaccharides in many glycoproteins as well as the carbohydrate moieties of glycolipids. Its function is as follows. The cell surface form functions as a recognition molecule during a variety of cell to cell and cell to matrix interactions, as those occurring during development and egg fertilization, by binding to specific oligosaccharide ligands on opposing cells or in the extracellular matrix. The secreted form is responsible for the synthesis of complex-type to N-linked oligosaccharides in many glycoproteins as well as the carbohydrate moieties of glycolipids. The protein is Beta-1,4-galactosyltransferase 1 of Mus musculus (Mouse).